A 385-amino-acid polypeptide reads, in one-letter code: Heat-inducible transcription repressor HrcA (385 aa).

It belongs to the HrcA family.

Its function is as follows. Negative regulator of class I heat shock genes (grpE-dnaK-dnaJ and groELS operons). Prevents heat-shock induction of these operons. This Protochlamydia amoebophila (strain UWE25) protein is Heat-inducible transcription repressor HrcA.